Reading from the N-terminus, the 93-residue chain is DNA-directed RNA polymerase subunit omega (93 aa).

Belongs to the RNA polymerase subunit omega family. In terms of assembly, the RNAP catalytic core consists of 2 alpha, 1 beta, 1 beta' and 1 omega subunit. When a sigma factor is associated with the core the holoenzyme is formed, which can initiate transcription.

The catalysed reaction is RNA(n) + a ribonucleoside 5'-triphosphate = RNA(n+1) + diphosphate. Promotes RNA polymerase assembly. Latches the N- and C-terminal regions of the beta' subunit thereby facilitating its interaction with the beta and alpha subunits. The protein is DNA-directed RNA polymerase subunit omega of Acinetobacter baylyi (strain ATCC 33305 / BD413 / ADP1).